The chain runs to 342 residues: Oxygen-dependent coproporphyrinogen-III oxidase (342 aa).

Residue S98 participates in substrate binding. Residues H102 and H112 each contribute to the a divalent metal cation site. Catalysis depends on H112, which acts as the Proton donor. 114-116 (NYR) serves as a coordination point for substrate. Positions 146 and 176 each coordinate a divalent metal cation. The interval 266–301 (YVEFNLVWDRGTIFGLQTNGRTESILMSLPPLARWE) is important for dimerization.

The protein belongs to the aerobic coproporphyrinogen-III oxidase family. As to quaternary structure, homodimer. The cofactor is a divalent metal cation.

It is found in the cytoplasm. The catalysed reaction is coproporphyrinogen III + O2 + 2 H(+) = protoporphyrinogen IX + 2 CO2 + 2 H2O. It functions in the pathway porphyrin-containing compound metabolism; protoporphyrin-IX biosynthesis; protoporphyrinogen-IX from coproporphyrinogen-III (O2 route): step 1/1. Functionally, involved in the heme and chlorophyll biosynthesis. Catalyzes the aerobic oxidative decarboxylation of propionate groups of rings A and B of coproporphyrinogen-III to yield the vinyl groups in protoporphyrinogen-IX. The sequence is that of Oxygen-dependent coproporphyrinogen-III oxidase from Prochlorococcus marinus (strain MIT 9515).